The following is a 162-amino-acid chain: Xylulose kinase (162 aa).

The interval G16 to Q39 is disordered. The segment covering A20–A33 has biased composition (low complexity).

Belongs to the FGGY kinase family.

The enzyme catalyses D-xylulose + ATP = D-xylulose 5-phosphate + ADP + H(+). In terms of biological role, catalyzes the phosphorylation of D-xylulose to D-xylulose 5-phosphate. This is Xylulose kinase from Actinoplanes sp. (strain ATCC 31351 / 3876) (Ampullariella sp.).